Consider the following 384-residue polypeptide: Brix domain-containing protein F44G4.1 (384 aa).

2 disordered regions span residues Met1–Lys58 and Ser82–Glu135. Acidic residues predominate over residues Phe18–Glu48. The span at Leu96 to Arg114 shows a compositional bias: basic residues. Positions Ala115–Leu127 are enriched in basic and acidic residues. Residues Pro177–Asp360 form the Brix domain.

This chain is Brix domain-containing protein F44G4.1, found in Caenorhabditis elegans.